A 567-amino-acid chain; its full sequence is UPF0313 protein TM_0337 (567 aa).

The Radical SAM core domain maps to 288 to 560 (KAIETVKFSI…NKMKENVLFK (273 aa)). 3 residues coordinate [4Fe-4S] cluster: Cys303, Cys307, and Cys310.

Belongs to the UPF0313 family. The cofactor is [4Fe-4S] cluster.

This chain is UPF0313 protein TM_0337, found in Thermotoga maritima (strain ATCC 43589 / DSM 3109 / JCM 10099 / NBRC 100826 / MSB8).